A 286-amino-acid polypeptide reads, in one-letter code: Shikimate dehydrogenase (NADP(+)) (286 aa).

Shikimate-binding positions include 19 to 21 and T66; that span reads SVS. Catalysis depends on K70, which acts as the Proton acceptor. Positions 91 and 106 each coordinate shikimate. NADP(+) is bound by residues 130 to 134 and A225; that span reads GAGGS. Shikimate is bound at residue Y227. G248 is a binding site for NADP(+).

This sequence belongs to the shikimate dehydrogenase family. In terms of assembly, homodimer.

It carries out the reaction shikimate + NADP(+) = 3-dehydroshikimate + NADPH + H(+). It functions in the pathway metabolic intermediate biosynthesis; chorismate biosynthesis; chorismate from D-erythrose 4-phosphate and phosphoenolpyruvate: step 4/7. Functionally, involved in the biosynthesis of the chorismate, which leads to the biosynthesis of aromatic amino acids. Catalyzes the reversible NADPH linked reduction of 3-dehydroshikimate (DHSA) to yield shikimate (SA). The protein is Shikimate dehydrogenase (NADP(+)) of Dehalococcoides mccartyi (strain ATCC BAA-2266 / KCTC 15142 / 195) (Dehalococcoides ethenogenes (strain 195)).